Reading from the N-terminus, the 552-residue chain is CTP synthase (552 aa).

Residues 1–270 form an amidoligase domain region; that stretch reads MTKYVFVTGG…DRIICEELKL (270 aa). S13 is a CTP binding site. S13 lines the UTP pocket. ATP contacts are provided by residues 14-19 and D71; that span reads SLGKGI. Mg(2+)-binding residues include D71 and E144. CTP is bound by residues 151–153, 191–196, and K227; these read DIE and KTKPTQ. UTP is bound by residues 191 to 196 and K227; that span reads KTKPTQ. Residues 295 to 547 form the Glutamine amidotransferase type-1 domain; it reads TIGMVGKYVD…VEAALANKQA (253 aa). G356 contributes to the L-glutamine binding site. C383 acts as the Nucleophile; for glutamine hydrolysis in catalysis. L-glutamine-binding positions include 384–387, E407, and R473; that span reads LGMQ. Catalysis depends on residues H520 and E522.

Belongs to the CTP synthase family. Homotetramer.

The enzyme catalyses UTP + L-glutamine + ATP + H2O = CTP + L-glutamate + ADP + phosphate + 2 H(+). It carries out the reaction L-glutamine + H2O = L-glutamate + NH4(+). The catalysed reaction is UTP + NH4(+) + ATP = CTP + ADP + phosphate + 2 H(+). It participates in pyrimidine metabolism; CTP biosynthesis via de novo pathway; CTP from UDP: step 2/2. With respect to regulation, allosterically activated by GTP, when glutamine is the substrate; GTP has no effect on the reaction when ammonia is the substrate. The allosteric effector GTP functions by stabilizing the protein conformation that binds the tetrahedral intermediate(s) formed during glutamine hydrolysis. Inhibited by the product CTP, via allosteric rather than competitive inhibition. Functionally, catalyzes the ATP-dependent amination of UTP to CTP with either L-glutamine or ammonia as the source of nitrogen. Regulates intracellular CTP levels through interactions with the four ribonucleotide triphosphates. This chain is CTP synthase, found in Burkholderia ambifaria (strain MC40-6).